Reading from the N-terminus, the 548-residue chain is Guanine nucleotide-binding protein-like 3 (548 aa).

The span at 1 to 45 (MKRPKLKKGSKRLSCHKRYKIQKKVREHNRKARKEAKKSGTRKQK) shows a compositional bias: basic residues. The segment at 1-118 (MKRPKLKKGS…KKNKGTKAAE (118 aa)) is disordered. Positions 58-114 (AEILQEAQRRRQQEEELKQNRKLERQKEVAKRRKLDEKKKKNSEKREKRDNKKNKGT) form a coiled coil. The segment covering 64–107 (AQRRRQQEEELKQNRKLERQKEVAKRRKLDEKKKKNSEKREKRD) has biased composition (basic and acidic residues). The 181-residue stretch at 125-305 (CRHVNKVLEQ…MLDSPALVVS (181 aa)) folds into the CP-type G domain. Residues 172-175 (NKAD), 256-263 (ANVGKSSV), and 298-301 (DSPA) contribute to the GTP site. Residues 459 to 548 (RQLVEPEPIE…DAYDFNTDFV (90 aa)) are disordered. Acidic residues predominate over residues 465–497 (EPIEEELEANDGEEDVEEEHEGSEEEEDEEVEQ). Residues 501 to 523 (SAKEQEVVSAKEQEVVSAKEQDS) are compositionally biased toward basic and acidic residues. The span at 524–534 (KSAGPSVSFDQ) shows a compositional bias: polar residues.

The protein belongs to the TRAFAC class YlqF/YawG GTPase family.

It localises to the nucleus. The protein localises to the nucleolus. May play a role in regulating cellular proliferation. This chain is Guanine nucleotide-binding protein-like 3 (gnl3), found in Xenopus tropicalis (Western clawed frog).